We begin with the raw amino-acid sequence, 173 residues long: NADH-ubiquinone oxidoreductase chain 6 (173 aa).

Helical transmembrane passes span 1-21 (MTYFMLFLGLCFVLGGLGVAS), 27-47 (YGVVGLVLASVVGCGWLLSLG), 48-68 (VSFVSLVLFMVYLGGMLVVFV), 87-107 (VVGYGVSFIAVLVVGVVIGGL), and 139-159 (CGVGMFLVAGWGLLLTLFVVL).

The protein belongs to the complex I subunit 6 family.

The protein localises to the mitochondrion membrane. It carries out the reaction a ubiquinone + NADH + 5 H(+)(in) = a ubiquinol + NAD(+) + 4 H(+)(out). Core subunit of the mitochondrial membrane respiratory chain NADH dehydrogenase (Complex I) that is believed to belong to the minimal assembly required for catalysis. Complex I functions in the transfer of electrons from NADH to the respiratory chain. The immediate electron acceptor for the enzyme is believed to be ubiquinone. This Synthliboramphus hypoleucus (Guadalupe murrelet) protein is NADH-ubiquinone oxidoreductase chain 6 (MT-ND6).